The chain runs to 691 residues: Protein 4.2 (691 aa).

G2 carries the N-myristoyl glycine lipid modification. The interval 31–39 (LFVRRGQPF) is band 3 binding. S248 is subject to Phosphoserine; by PKA.

Belongs to the transglutaminase superfamily. Transglutaminase family. In terms of assembly, component of the ankyrin-1 complex in the erythrocyte, composed of ANK1, RHCE, RHAG, SLC4A1, EPB42, GYPA, GYPB and AQP1. Interacts with SLC4A1 (via the cytoplasmic domain); this interaction is mediated by the SLC4A1 Band 3-I dimer. Interacts with ANK1 (via ANK 1-13 repeats). Interacts with AQP1 (via the C-terminal). In terms of processing, both cAMP-dependent kinase (CAPK) and another kinase present in the red-blood cells seem to be able to phosphorylate EPB42.

The protein resides in the cell membrane. It localises to the cytoplasm. It is found in the cytoskeleton. Functionally, component of the ankyrin-1 complex, a multiprotein complex involved in the stability and shape of the erythrocyte membrane. This chain is Protein 4.2, found in Homo sapiens (Human).